The primary structure comprises 501 residues: Glucose-6-phosphate isomerase (501 aa).

Residues Gly-78 to Ser-101 are disordered. Residues Arg-86–Gly-97 are compositionally biased toward basic and acidic residues. Glu-333 (proton donor) is an active-site residue. Residues His-364 and Lys-474 contribute to the active site.

It belongs to the GPI family.

The protein resides in the cytoplasm. The catalysed reaction is alpha-D-glucose 6-phosphate = beta-D-fructose 6-phosphate. It functions in the pathway carbohydrate biosynthesis; gluconeogenesis. It participates in carbohydrate degradation; glycolysis; D-glyceraldehyde 3-phosphate and glycerone phosphate from D-glucose: step 2/4. Its function is as follows. Catalyzes the reversible isomerization of glucose-6-phosphate to fructose-6-phosphate. This Sphingopyxis alaskensis (strain DSM 13593 / LMG 18877 / RB2256) (Sphingomonas alaskensis) protein is Glucose-6-phosphate isomerase.